A 149-amino-acid polypeptide reads, in one-letter code: Calmodulin (149 aa).

At Ala2 the chain carries N-acetylalanine. EF-hand domains are found at residues 8-43 (EQIA…LGQN), 44-79 (PTEA…KMKD), 81-116 (DSEE…LGEK), and 117-149 (LSED…MMSK). Asp21, Asp23, Asp25, Thr27, Glu32, Asp57, Asp59, Asn61, Thr63, Glu68, Asp94, Asp96, Asn98, Tyr100, Glu105, Asp130, Asp132, Asp134, Gln136, and Glu141 together coordinate Ca(2+).

The protein belongs to the calmodulin family.

Its function is as follows. Calmodulin mediates the control of a large number of enzymes, ion channels and other proteins by Ca(2+). Among the enzymes to be stimulated by the calmodulin-Ca(2+) complex are a number of protein kinases and phosphatases. The chain is Calmodulin (CMD1) from Blastocladiella emersonii (Aquatic fungus).